The following is a 576-amino-acid chain: DNA mismatch repair protein MutL (576 aa).

This sequence belongs to the DNA mismatch repair MutL/HexB family.

Its function is as follows. This protein is involved in the repair of mismatches in DNA. It is required for dam-dependent methyl-directed DNA mismatch repair. May act as a 'molecular matchmaker', a protein that promotes the formation of a stable complex between two or more DNA-binding proteins in an ATP-dependent manner without itself being part of a final effector complex. The chain is DNA mismatch repair protein MutL from Chlamydia trachomatis serovar L2 (strain ATCC VR-902B / DSM 19102 / 434/Bu).